We begin with the raw amino-acid sequence, 437 residues long: Interactor protein for cytohesin exchange factors 1 (437 aa).

The region spanning 41-140 (HADCQGWLYK…WLNKLGSAVI (100 aa)) is the PH domain. 2 disordered regions span residues 143–225 (ESTT…PDTV) and 273–307 (LSSD…ETKV). Over residues 151–162 (CYSESEQEDPEI) the composition is skewed to acidic residues. Positions 172–200 (ASQTQSLTAQQASSSSPSLSGTSYSFSSL) are enriched in low complexity. The segment covering 201-214 (ENTVKTPSSFPSSL) has biased composition (polar residues). The segment covering 273 to 283 (LSSDDTSSLSS) has biased composition (low complexity). 2 CRAC domain regions span residues 315–320 (KLYKSL) and 339–348 (LRKSFVKRCK). Positions 389–437 (KYREWKVMNTLLIQDIYQQQRASPAPDDTDDTPQELKKSPSSPSVENSI) are required for interaction with CYTH2. The disordered stretch occupies residues 406-437 (QQQRASPAPDDTDDTPQELKKSPSSPSVENSI). Phosphoserine is present on Ser-411. Over residues 427–437 (SPSSPSVENSI) the composition is skewed to polar residues.

Interacts with guanine-nucleotide exchange factors PSCD1, PSCD2, PSCD3 and PSCD4. Interacts (via C-terminus) with cytohesin-2 CYTH2.

It is found in the cytoplasm. The protein localises to the cell membrane. Enhances the promotion of guanine-nucleotide exchange by PSCD2 on ARF6 in a concentration-dependent manner. The sequence is that of Interactor protein for cytohesin exchange factors 1 (IPCEF1) from Homo sapiens (Human).